Consider the following 999-residue polypeptide: Lysosomal alpha-mannosidase (999 aa).

The tract at residues 1–25 (MVGDARPSGVRAGGCRGAVGSRTSS) is disordered. A signal peptide spans 1 to 50 (MVGDARPSGVRAGGCRGAVGSRTSSRALRPPLPPLSSLFVLFLAAPCAWA). Zn(2+) contacts are provided by His-73 and Asp-75. Residue Asn-134 is glycosylated (N-linked (GlcNAc...) asparagine). Asp-197 serves as a coordination point for Zn(2+). Asp-197 serves as the catalytic Nucleophile. A disulfide bond links Cys-269 and Cys-274. The N-linked (GlcNAc...) asparagine glycan is linked to Asn-369. His-448 is a Zn(2+) binding site. A disulfide bond links Cys-495 and Cys-503. Asn-499 is a glycosylation site (N-linked (GlcNAc...) asparagine). Residues 591-621 (SRDLVIQNEYLRARFDPNTGLLMELENLEQN) constitute a propeptide that is removed on maturation. 5 N-linked (GlcNAc...) asparagine glycosylation sites follow: Asn-634, Asn-640, Asn-681, Asn-755, and Asn-919.

Belongs to the glycosyl hydrolase 38 family. Homodimer. Requires Zn(2+) as cofactor. In terms of processing, processed into 5 peptides of 35/38 kDa (A), 11/13 kDa (B) and 22 kDa (C), 38 kDa (D) and 13/15 kDa (E). The A, B and C peptides are disulfide-linked into a 67 kDa complex. Heavily glycosylated. Some sugar chains are of the high-mannose type.

It localises to the lysosome. It carries out the reaction Hydrolysis of terminal, non-reducing alpha-D-mannose residues in alpha-D-mannosides.. Necessary for the catabolism of N-linked carbohydrates released during glycoprotein turnover. This chain is Lysosomal alpha-mannosidase (MAN2B1), found in Bos taurus (Bovine).